An 892-amino-acid polypeptide reads, in one-letter code: von Willebrand factor A domain-containing protein 7 (892 aa).

An N-terminal signal peptide occupies residues 1-27 (MLPVEVPLSQLGPPVLLLQLLLPPTSA). Asn-54 carries an N-linked (GlcNAc...) asparagine glycan. Positions 231–272 (YFGTNPPKPPGKCSHGGRFDQSSSQPPRGGINKDSTSPSFSP) are disordered. One can recognise a VWFA domain in the interval 313–495 (ASSLSFVLDT…HIRDVAAVVG (183 aa)).

It localises to the secreted. The protein is von Willebrand factor A domain-containing protein 7 (Vwa7) of Rattus norvegicus (Rat).